The chain runs to 570 residues: Trans-cinnamate:CoA ligase, peroxisomal (570 aa).

A Microbody targeting signal motif is present at residues 568 to 570; the sequence is ARL.

This sequence belongs to the ATP-dependent AMP-binding enzyme family. As to quaternary structure, monomer. K(+) is required as a cofactor. In terms of tissue distribution, mostly expressed in flower organs, with highest levels in corollas and petal limbs, and, to a lesser extent, in petal tubes, sepals, pistils, stamen, stigma, anthers and ovaries. Also present at low levels in leaves, stems and roots.

It localises to the peroxisome. It catalyses the reaction (E)-4-coumarate + ATP + CoA = (E)-4-coumaroyl-CoA + AMP + diphosphate. The catalysed reaction is (E)-caffeate + ATP + CoA = (E)-caffeoyl-CoA + AMP + diphosphate. The enzyme catalyses (E)-cinnamate + ATP + CoA = (E)-cinnamoyl-CoA + AMP + diphosphate. The protein operates within phenylpropanoid metabolism; trans-cinnamate biosynthesis. Its pathway is phytoalexin biosynthesis; 3,4',5-trihydroxystilbene biosynthesis; 3,4',5-trihydroxystilbene from trans-4-coumarate: step 1/2. Functionally, involved in the biosynthesis of floral volatile benzenoid/phenylpropanoid (FVBP) scent (e.g. benzylbenzoate, phenylethylbenzoate, and methylbenzoate). Catalyzes the formation of CoA esters of cinnamic acid, and, with lower efficiency, of 4-coumaric acid and caffeic acid. This chain is Trans-cinnamate:CoA ligase, peroxisomal, found in Petunia hybrida (Petunia).